Reading from the N-terminus, the 436-residue chain is MGQVLPLVTRQGDRIAIVSGLRTPFARQATAFHGIPAVDLGKMVVGELLARSEIPAEVIEQLVFGQVVQMPEAPNIAREIVLGTGMNVHTDAYSVSRACATSFQAIANVAESLMAGTIRAGIAGGADSSSVLPIGVSKKLARVLVDVNKARTMSQRLKLFSRLRLRDLMPVPPAVAEYSTGLRMGDTAEQMAKTYGITREQQDALAHRSHQRAAQAWSDGKLKEEVMTAFIPPYKQPLVEDNNIRGNSSLADYAKLRPAFDRKHGTVTAANSTPLTDGAAAVILMTESRAKELGLVPLGYLRSYAFTAIDVWQDMLLGPAWSTPLALERAGLTMSDLTLIDMHEAFAAQTLANIQLLGSERFARDVLGRAHATGEVDESKFNVLGGSIAYGHPFAATGARMITQTLHELRRRGGGFGLVTACAAGGLGAAMVVEAE.

Cysteine 99 serves as the catalytic Acyl-thioester intermediate. Catalysis depends on proton acceptor residues histidine 392 and cysteine 422.

The protein belongs to the thiolase-like superfamily. Thiolase family. In terms of assembly, heterotetramer of two alpha chains (FadJ) and two beta chains (FadI).

The protein resides in the cytoplasm. The catalysed reaction is an acyl-CoA + acetyl-CoA = a 3-oxoacyl-CoA + CoA. It functions in the pathway lipid metabolism; fatty acid beta-oxidation. Catalyzes the final step of fatty acid oxidation in which acetyl-CoA is released and the CoA ester of a fatty acid two carbons shorter is formed. This chain is 3-ketoacyl-CoA thiolase, found in Escherichia coli O7:K1 (strain IAI39 / ExPEC).